Consider the following 161-residue polypeptide: Bifurcating [FeFe] hydrogenase gamma subunit (161 aa).

Residues cysteine 78, cysteine 83, cysteine 119, and cysteine 123 each contribute to the [2Fe-2S] cluster site.

This sequence belongs to the complex I 24 kDa subunit family. As to quaternary structure, heterotrimer composed of HydA (alpha subunit), HydB (beta subunit) and HydC (gamma subunit). Near neutral and acidic pH conditions favor oligomerization of the heterotrimeric holoenzyme. It depends on [2Fe-2S] cluster as a cofactor.

It localises to the cytoplasm. The enzyme catalyses 2 H2 + 2 oxidized [2Fe-2S]-[ferredoxin] + NAD(+) = 2 reduced [2Fe-2S]-[ferredoxin] + NADH + 3 H(+). In terms of biological role, catalyzes the oxidation of the physiological electron carriers NADH and reduced ferredoxin, coupled to the production of H(2). Acts as a bifurcating [FeFe] hydrogenase, which uses the exergonic oxidation of reduced ferredoxin to drive the unfavorable oxidation of NADH to produce H(2). The gamma subunit might be the site where reduced ferredoxin is oxidized. This chain is Bifurcating [FeFe] hydrogenase gamma subunit, found in Thermotoga maritima (strain ATCC 43589 / DSM 3109 / JCM 10099 / NBRC 100826 / MSB8).